We begin with the raw amino-acid sequence, 179 residues long: Cytoglobin-2 (179 aa).

The 150-residue stretch at 18–167 (PLSDAEMEII…VYWHVTGAYT (150 aa)) folds into the Globin domain. Positions 81 and 113 each coordinate heme b.

This sequence belongs to the globin family. In terms of assembly, monomeric.

The protein localises to the cytoplasm. It localises to the nucleus. The enzyme catalyses Fe(II)-heme b-[protein] + nitric oxide + O2 = Fe(III)-heme b-[protein] + nitrate. It catalyses the reaction Fe(III)-heme b-[protein] + nitric oxide + H2O = Fe(II)-heme b-[protein] + nitrite + 2 H(+). It carries out the reaction 2 superoxide + 2 H(+) = H2O2 + O2. The catalysed reaction is H2O2 + AH2 = A + 2 H2O. Probable multifunctional globin with a hexacoordinated heme iron required for the catalysis of various reactions depending on redox condition of the cell as well as oxygen availability. Has a nitric oxide dioxygenase (NOD) activity and is most probably involved in cell-mediated and oxygen-dependent nitric oxide consumption. Under normoxic conditions functions as a nitric oxide dioxygenase (NOD) but under hypoxic conditions the globin may switch its function to that of a nitrite (NO2) reductase (NiR), generating nitric oxide. Could also have peroxidase and superoxide dismutase activities, detoxifying reactive oxygen species and protecting cells against oxidative stress. Also binds dioxygen with low affinity and could function as an oxygen sensor but has probably no function as a respiratory oxygen carrier. The sequence is that of Cytoglobin-2 from Oryzias latipes (Japanese rice fish).